The primary structure comprises 261 residues: Cytochrome c oxidase subunit 3 (261 aa).

Topologically, residues 1-15 (MAHQAHAYHMVDPSP) are mitochondrial matrix. A helical transmembrane segment spans residues 16 to 34 (WPLTGAIGALFLTSGLAIW). Topologically, residues 35–40 (FHFQSV) are mitochondrial intermembrane. The chain crosses the membrane as a helical span at residues 41–66 (TLLTLGLILLLLTMYQWWRDIIREGT). At 67 to 72 (FQGHHT) the chain is on the mitochondrial matrix side. The chain crosses the membrane as a helical span at residues 73–105 (PPVQKGLRYGMILFITSEVFFFLGFFWAFYHSS). Residues 106–128 (LAPTPELGGCWPPTGITPLDPFE) lie on the Mitochondrial intermembrane side of the membrane. Residues 129-152 (VPLLNTAVLLASGVTVTWAHHSLM) traverse the membrane as a helical segment. The Mitochondrial matrix segment spans residues 153-155 (EGA). Residues 156–183 (RKQAIQALALTIILGVYFTALQAMEYYE) traverse the membrane as a helical segment. The Mitochondrial intermembrane portion of the chain corresponds to 184–190 (APFTIAD). The chain crosses the membrane as a helical span at residues 191–223 (GVYGSTFFVATGFHGLHVIIGSSFLAVCLLRQI). Topologically, residues 224–232 (QYHFTSEHH) are mitochondrial matrix. Residues 233–256 (FGFEAAAWYWHFVDVVWLFLYVSI) traverse the membrane as a helical segment. Residues 257–261 (YWWGS) lie on the Mitochondrial intermembrane side of the membrane.

The protein belongs to the cytochrome c oxidase subunit 3 family. In terms of assembly, component of the cytochrome c oxidase (complex IV, CIV), a multisubunit enzyme composed of 14 subunits. The complex is composed of a catalytic core of 3 subunits MT-CO1, MT-CO2 and MT-CO3, encoded in the mitochondrial DNA, and 11 supernumerary subunits COX4I, COX5A, COX5B, COX6A, COX6B, COX6C, COX7A, COX7B, COX7C, COX8 and NDUFA4, which are encoded in the nuclear genome. The complex exists as a monomer or a dimer and forms supercomplexes (SCs) in the inner mitochondrial membrane with NADH-ubiquinone oxidoreductase (complex I, CI) and ubiquinol-cytochrome c oxidoreductase (cytochrome b-c1 complex, complex III, CIII), resulting in different assemblies (supercomplex SCI(1)III(2)IV(1) and megacomplex MCI(2)III(2)IV(2)).

It localises to the mitochondrion inner membrane. The catalysed reaction is 4 Fe(II)-[cytochrome c] + O2 + 8 H(+)(in) = 4 Fe(III)-[cytochrome c] + 2 H2O + 4 H(+)(out). Functionally, component of the cytochrome c oxidase, the last enzyme in the mitochondrial electron transport chain which drives oxidative phosphorylation. The respiratory chain contains 3 multisubunit complexes succinate dehydrogenase (complex II, CII), ubiquinol-cytochrome c oxidoreductase (cytochrome b-c1 complex, complex III, CIII) and cytochrome c oxidase (complex IV, CIV), that cooperate to transfer electrons derived from NADH and succinate to molecular oxygen, creating an electrochemical gradient over the inner membrane that drives transmembrane transport and the ATP synthase. Cytochrome c oxidase is the component of the respiratory chain that catalyzes the reduction of oxygen to water. Electrons originating from reduced cytochrome c in the intermembrane space (IMS) are transferred via the dinuclear copper A center (CU(A)) of subunit 2 and heme A of subunit 1 to the active site in subunit 1, a binuclear center (BNC) formed by heme A3 and copper B (CU(B)). The BNC reduces molecular oxygen to 2 water molecules using 4 electrons from cytochrome c in the IMS and 4 protons from the mitochondrial matrix. The protein is Cytochrome c oxidase subunit 3 (mt-co3) of Formosania lacustris (Oriental stream loach).